Consider the following 433-residue polypeptide: FAD-dependent monooxygenase notI' (433 aa).

Residues E45 and R117 each coordinate FAD. Residue R195 is part of the active site. Residues D314 and A327 each contribute to the FAD site.

It belongs to the paxM FAD-dependent monooxygenase family. FAD is required as a cofactor.

The protein operates within alkaloid biosynthesis. Its function is as follows. FAD-dependent monooxygenase; part of the gene cluster that mediates the biosynthesis of notoamide, a fungal indole alkaloid that belongs to a family of natural products containing a characteristic bicyclo[2.2.2]diazaoctane core. The first step of notoamide biosynthesis involves coupling of L-proline and L-tryptophan by the bimodular NRPS notE', to produce cyclo-L-tryptophan-L-proline called brevianamide F. The reverse prenyltransferase notF' then acts as a deoxybrevianamide E synthase and converts brevianamide F to deoxybrevianamide E via reverse prenylation at C-2 of the indole ring leading to the bicyclo[2.2.2]diazaoctane core. Deoxybrevianamide E is further hydroxylated at C-6 of the indole ring, likely catalyzed by the cytochrome P450 monooxygenase notG', to yield 6-hydroxy-deoxybrevianamide E. 6-hydroxy-deoxybrevianamide E is a specific substrate of the prenyltransferase notC' for normal prenylation at C-7 to produce 6-hydroxy-7-prenyl-deoxybrevianamide, also called notoamide S. As the proposed pivotal branching point in notoamide biosynthesis, notoamide S can be diverted to notoamide E through an oxidative pyran ring closure putatively catalyzed by either notH' cytochrome P450 monooxygenase or the notD' FAD-linked oxidoreductase. This step would be followed by an indole 2,3-epoxidation-initiated pinacol-like rearrangement catalyzed by the notB' FAD-dependent monooxygenase leading to the formation of notoamide C and notoamide D. On the other hand notoamide S is converted to notoamide T by notH' (or notD'), a bifunctional oxidase that also functions as the intramolecular Diels-Alderase responsible for generation of (-)-notoamide T. To generate antipodal (+)-notoaminide T, notH (or notD) in Aspergillus strain MF297-2 is expected to catalyze a Diels-Alder reaction leading to the opposite stereochemistry. The remaining oxidoreductase notD' (or notH') likely catalyzes the oxidative pyran ring formation to yield (-)-stephacidin A. The FAD-dependent monooxygenase notI' is highly similar to notB' and is predicted to catalyze a similar conversion from (-)-stephacidin A to (+)-notoamide B via the 2,3-epoxidation of (-)-stephacidin A followed by a pinacol-type rearrangement. Finally, it remains unclear which enzyme could be responsible for the final hydroxylation steps leading to notoamide A and sclerotiamide. The protein is FAD-dependent monooxygenase notI' of Aspergillus versicolor.